An 891-amino-acid chain; its full sequence is Alanine--tRNA ligase (891 aa).

Zn(2+) contacts are provided by His-564, His-568, Cys-677, and His-681.

Belongs to the class-II aminoacyl-tRNA synthetase family. Zn(2+) serves as cofactor.

It localises to the cytoplasm. The enzyme catalyses tRNA(Ala) + L-alanine + ATP = L-alanyl-tRNA(Ala) + AMP + diphosphate. In terms of biological role, catalyzes the attachment of alanine to tRNA(Ala) in a two-step reaction: alanine is first activated by ATP to form Ala-AMP and then transferred to the acceptor end of tRNA(Ala). Also edits incorrectly charged Ser-tRNA(Ala) and Gly-tRNA(Ala) via its editing domain. The protein is Alanine--tRNA ligase of Rhodopseudomonas palustris (strain HaA2).